Here is a 248-residue protein sequence, read N- to C-terminus: Ubiquinone/menaquinone biosynthesis C-methyltransferase UbiE (248 aa).

The S-adenosyl-L-methionine site is built by serine 68 and aspartate 92.

It belongs to the class I-like SAM-binding methyltransferase superfamily. MenG/UbiE family.

It carries out the reaction a 2-demethylmenaquinol + S-adenosyl-L-methionine = a menaquinol + S-adenosyl-L-homocysteine + H(+). It catalyses the reaction a 2-methoxy-6-(all-trans-polyprenyl)benzene-1,4-diol + S-adenosyl-L-methionine = a 5-methoxy-2-methyl-3-(all-trans-polyprenyl)benzene-1,4-diol + S-adenosyl-L-homocysteine + H(+). Its pathway is quinol/quinone metabolism; menaquinone biosynthesis; menaquinol from 1,4-dihydroxy-2-naphthoate: step 2/2. It functions in the pathway cofactor biosynthesis; ubiquinone biosynthesis. Its function is as follows. Methyltransferase required for the conversion of demethylmenaquinol (DMKH2) to menaquinol (MKH2) and the conversion of 2-polyprenyl-6-methoxy-1,4-benzoquinol (DDMQH2) to 2-polyprenyl-3-methyl-6-methoxy-1,4-benzoquinol (DMQH2). The polypeptide is Ubiquinone/menaquinone biosynthesis C-methyltransferase UbiE (Rickettsia felis (strain ATCC VR-1525 / URRWXCal2) (Rickettsia azadi)).